Reading from the N-terminus, the 103-residue chain is Large ribosomal subunit protein bL21 (103 aa).

The protein belongs to the bacterial ribosomal protein bL21 family. Part of the 50S ribosomal subunit. Contacts protein L20.

Its function is as follows. This protein binds to 23S rRNA in the presence of protein L20. This chain is Large ribosomal subunit protein bL21, found in Clostridium beijerinckii (strain ATCC 51743 / NCIMB 8052) (Clostridium acetobutylicum).